A 109-amino-acid polypeptide reads, in one-letter code: U4-lycotoxin-Ls1c (109 aa).

Residues 1 to 22 (MKVLVLFSVLFLTLFSYSSTEA) form the signal peptide. Positions 23–44 (IDEFDSDAEDDMLSLMANEQVR) are excised as a propeptide. Positions 45-88 (AKACTPRLHDCSHDRHSCCRGELFKDVCYCFYPEGEDITEVCSC) are knottin domain. 4 disulfide bridges follow: Cys-48/Cys-63, Cys-55/Cys-72, Cys-62/Cys-88, and Cys-74/Cys-86. Residues 89–108 (QQPKSHKYIEKVVDKAKTVV) form a linear cationic cytotoxin domain region.

It belongs to the neurotoxin 19 (CSTX) family. 05 (U4-Lctx) subfamily. As to expression, expressed by the venom gland.

The protein localises to the secreted. Enhances the high-affinity desensitization of human P2RX3 purinoceptors. This chain is U4-lycotoxin-Ls1c, found in Lycosa singoriensis (Wolf spider).